A 217-amino-acid polypeptide reads, in one-letter code: Probable transaldolase (217 aa).

Lys83 functions as the Schiff-base intermediate with substrate in the catalytic mechanism.

Belongs to the transaldolase family. Type 3B subfamily.

Its subcellular location is the cytoplasm. It carries out the reaction D-sedoheptulose 7-phosphate + D-glyceraldehyde 3-phosphate = D-erythrose 4-phosphate + beta-D-fructose 6-phosphate. It functions in the pathway carbohydrate degradation; pentose phosphate pathway; D-glyceraldehyde 3-phosphate and beta-D-fructose 6-phosphate from D-ribose 5-phosphate and D-xylulose 5-phosphate (non-oxidative stage): step 2/3. Transaldolase is important for the balance of metabolites in the pentose-phosphate pathway. This Rhizorhabdus wittichii (strain DSM 6014 / CCUG 31198 / JCM 15750 / NBRC 105917 / EY 4224 / RW1) (Sphingomonas wittichii) protein is Probable transaldolase.